Here is a 409-residue protein sequence, read N- to C-terminus: Peptidase T (409 aa).

His-78 is a Zn(2+) binding site. Residue Asp-80 is part of the active site. Position 140 (Asp-140) interacts with Zn(2+). Glu-173 serves as the catalytic Proton acceptor. Zn(2+)-binding residues include Glu-174, Asp-196, and His-379.

This sequence belongs to the peptidase M20B family. Zn(2+) serves as cofactor.

The protein localises to the cytoplasm. It catalyses the reaction Release of the N-terminal residue from a tripeptide.. Cleaves the N-terminal amino acid of tripeptides. The chain is Peptidase T from Salmonella paratyphi C (strain RKS4594).